We begin with the raw amino-acid sequence, 584 residues long: DNA ligase (584 aa).

An ATP-binding site is contributed by glutamate 249. Catalysis depends on lysine 251, which acts as the N6-AMP-lysine intermediate. ATP-binding residues include arginine 256, arginine 271, glutamate 301, phenylalanine 341, arginine 416, and lysine 422.

The protein belongs to the ATP-dependent DNA ligase family. The cofactor is Mg(2+).

It carries out the reaction ATP + (deoxyribonucleotide)n-3'-hydroxyl + 5'-phospho-(deoxyribonucleotide)m = (deoxyribonucleotide)n+m + AMP + diphosphate.. Its function is as follows. DNA ligase that seals nicks in double-stranded DNA during DNA replication, DNA recombination and DNA repair. This chain is DNA ligase, found in Pyrobaculum islandicum (strain DSM 4184 / JCM 9189 / GEO3).